The following is a 567-amino-acid chain: MEFEKLANLFSKLETISDKTRKVQYIARFLKELKDQYKETLLLLQGTVFYPWEQKNLGIAEKGVIRAISIAYGIEKQKVEELFIKYGDLGIVAEKACEMRKQKPLLLKPLTVKDVYQTLRKIADIEGEGSQDKKIITFAKLLVNAKPKEAKYIVRLALEELRIGVGEGIIRDAIAIAFSVTPEAVEYAYSILLDFGEVVRIAKEQGEQGLWQVKLQVGRPFRVMLAIRARNVQEAFDIVGRPAMIEAKYDGFRLQIHKKGDQVWLWTRRLEDVTRQFPDVVNIVRNRVKANEIIFEAEAVGYDKKTNKFLPFQKISQRVKRKYDIEKMAKEIPVELHAFDIVYLEGEQLMKKPFKERRALLEKVIDEKEHEIQLSIGIIEKDDKKAYQFYQDCLNKGLEGVMFKNLNAPYQPGRRVGYMVKLKPTLETLDLVIVAAEWGEGKRSGWLTSFTVAALDKDTGNYLEVGEVGTGIKEKKERAEDITFEELTELLKPYIYKQEGKKVYVKPKIVVEVAYEEIQESPRYKSGFALRFPRIVRIRFDRSPKEIDTIDRIKQIYEMQRGGIHKQ.

Glutamate 246 provides a ligand contact to ATP. Residue lysine 248 is the N6-AMP-lysine intermediate of the active site. ATP contacts are provided by arginine 253, arginine 268, glutamate 298, phenylalanine 339, arginine 415, and lysine 421.

The protein belongs to the ATP-dependent DNA ligase family. It depends on Mg(2+) as a cofactor.

It carries out the reaction ATP + (deoxyribonucleotide)n-3'-hydroxyl + 5'-phospho-(deoxyribonucleotide)m = (deoxyribonucleotide)n+m + AMP + diphosphate.. DNA ligase that seals nicks in double-stranded DNA during DNA replication, DNA recombination and DNA repair. The sequence is that of DNA ligase from Nanoarchaeum equitans (strain Kin4-M).